The primary structure comprises 166 residues: Myosin regulatory light chain 2, ventricular/cardiac muscle isoform (166 aa).

Ser-2 bears the N,N,N-trimethylserine mark. Phosphoserine occurs at positions 14, 15, and 19. 3 consecutive EF-hand domains span residues 24 to 59, 94 to 129, and 130 to 165; these read TQIQ…LGRV, DPEE…QAER, and FSKE…GEEK. Ca(2+) is bound by residues Asp-37, Asn-39, Asp-41, and Asp-48. Phosphothreonine is present on Thr-52.

In terms of assembly, myosin is a hexamer of 2 heavy chains and 4 light chains. Interacts with MYOC. In terms of processing, N-terminus is methylated by METTL11A/NTM1. Post-translationally, phosphorylated by MYLK3 and MYLK2; promotes cardiac muscle contraction and function. Dephosphorylated by PPP1CB complexed to PPP1R12B. The phosphorylated form in adult is expressed as gradients across the heart from endocardium (low phosphorylation) to epicardium (high phosphorylation); regulates cardiac torsion and workload distribution. In terms of tissue distribution, abundantly expressed in both cardiac and slow skeletal muscle (soleus), with no detectable expression in fast skeletal muscle (vastus lateralis) or non-muscle tissue.

The protein resides in the cytoplasm. It localises to the myofibril. Its subcellular location is the sarcomere. The protein localises to the a band. Functionally, contractile protein that plays a role in heart development and function. Following phosphorylation, plays a role in cross-bridge cycling kinetics and cardiac muscle contraction by increasing myosin lever arm stiffness and promoting myosin head diffusion; as a consequence of the increase in maximum contraction force and calcium sensitivity of contraction force. These events altogether slow down myosin kinetics and prolong duty cycle resulting in accumulated myosins being cooperatively recruited to actin binding sites to sustain thin filament activation as a means to fine-tune myofilament calcium sensitivity to force. During cardiogenesis plays an early role in cardiac contractility by promoting cardiac myofibril assembly. The protein is Myosin regulatory light chain 2, ventricular/cardiac muscle isoform of Rattus norvegicus (Rat).